A 446-amino-acid polypeptide reads, in one-letter code: Exodeoxyribonuclease 7 large subunit (446 aa).

It belongs to the XseA family. In terms of assembly, heterooligomer composed of large and small subunits.

The protein localises to the cytoplasm. The catalysed reaction is Exonucleolytic cleavage in either 5'- to 3'- or 3'- to 5'-direction to yield nucleoside 5'-phosphates.. Functionally, bidirectionally degrades single-stranded DNA into large acid-insoluble oligonucleotides, which are then degraded further into small acid-soluble oligonucleotides. This is Exodeoxyribonuclease 7 large subunit from Acholeplasma laidlawii (strain PG-8A).